We begin with the raw amino-acid sequence, 138 residues long: Large ribosomal subunit protein uL16 (138 aa).

Positions 1–13 (MLQPARRKYRKEQ) are enriched in basic residues. Residues 1-20 (MLQPARRKYRKEQKGRNTGV) are disordered.

This sequence belongs to the universal ribosomal protein uL16 family. In terms of assembly, part of the 50S ribosomal subunit.

Binds 23S rRNA and is also seen to make contacts with the A and possibly P site tRNAs. The protein is Large ribosomal subunit protein uL16 of Verminephrobacter eiseniae (strain EF01-2).